The sequence spans 205 residues: Imidazoleglycerol-phosphate dehydratase (205 aa).

The protein belongs to the imidazoleglycerol-phosphate dehydratase family.

It is found in the cytoplasm. It catalyses the reaction D-erythro-1-(imidazol-4-yl)glycerol 3-phosphate = 3-(imidazol-4-yl)-2-oxopropyl phosphate + H2O. The protein operates within amino-acid biosynthesis; L-histidine biosynthesis; L-histidine from 5-phospho-alpha-D-ribose 1-diphosphate: step 6/9. This is Imidazoleglycerol-phosphate dehydratase from Chloroflexus aggregans (strain MD-66 / DSM 9485).